We begin with the raw amino-acid sequence, 480 residues long: Transmembrane protein 161A (480 aa).

Residues 1-28 (MAVLGVQLVVTLFTATLMHRLAPHCSFA) form the signal peptide. Residues 29 to 98 (RWLLCNGSLF…LTAVDALVLR (70 aa)) lie on the Extracellular side of the membrane. Asn-34 carries an N-linked (GlcNAc...) asparagine glycan. The helical transmembrane segment at 99 to 119 (FFLEYQWFVDFAVYSVGVYLF) threads the bilayer. Residues 120–134 (TEAYYFVLGPVQETN) are Cytoplasmic-facing. A helical membrane pass occupies residues 135–155 (IAVFWCLLTLAFSLKVFLMVT). The Extracellular portion of the chain corresponds to 156 to 166 (RLYFSTKEGGE). The helical transmembrane segment at 167 to 187 (RSVCLSFAFLFLLLAMLVQVV) threads the bilayer. The Cytoplasmic segment spans residues 188–224 (REETLELGLEPGLASMTQHLEPILKKQDWDWTLPVIK). Residues 225–245 (LAIRLGLAVLGSLLGAFLIFP) traverse the membrane as a helical segment. Residues 246 to 263 (GLRLAQTHQDALTLSADR) are Extracellular-facing. A helical transmembrane segment spans residues 264-284 (PLLQLLLHTSFLSPLCTLWLW). Residues 285 to 304 (TKPVARDFLYQAPTRNMTFS) lie on the Cytoplasmic side of the membrane. The chain crosses the membrane as a helical span at residues 305 to 325 (VPSEGAFDSLRLWVLVALCLL). Residues 326-370 (RLAVTRPHLQAYLCLAKARVEQLRKEAGRIEAREIQQRVVRVYCY) are Extracellular-facing. Residues 371–391 (VTVVSLQYLTPLILTLHCTLL) traverse the membrane as a helical segment. The Cytoplasmic segment spans residues 392–450 (LKTLGGYSWALSSTPPPLAPSQPSEALIPVDPAGDEAQQTAAQVAGILGGLLTPLFLRG). The helical transmembrane segment at 451 to 473 (MLAYIIWWTAACQLLSSLFGLYF) threads the bilayer. Over 474 to 480 (HQHLAAS) the chain is Extracellular.

Belongs to the TMEM161 family.

The protein localises to the membrane. In terms of biological role, may play a role in protection against oxidative stress. Overexpression leads to reduced levels of oxidant-induced DNA damage and apoptosis. The chain is Transmembrane protein 161A (Tmem161a) from Mus musculus (Mouse).